A 359-amino-acid polypeptide reads, in one-letter code: Transcription factor MafA (359 aa).

Ser-14 carries the post-translational modification Phosphoserine. A Glycyl lysine isopeptide (Lys-Gly) (interchain with G-Cter in SUMO2) cross-link involves residue Lys-32. Disordered regions lie at residues 40–105 and 172–226; these read RFCH…VGGA and GGGA…AGHH. Over residues 46–73 the composition is skewed to low complexity; the sequence is PPGSLSSTPLSTPCSSVPSSPSFCAPSP. Ser-49 carries the phosphoserine modification. Thr-53 and Thr-57 each carry phosphothreonine. Phosphoserine occurs at positions 61 and 65. The segment covering 74 to 84 has biased composition (gly residues); that stretch reads GTGGGAGGGGS. The span at 181–209 shows a compositional bias: basic residues; the sequence is GHHHGAHHTAHHHHSAHHHHHHHHHHGGS. The segment covering 210–224 has biased composition (gly residues); sequence GHHGGGAGHGGGGAG. Residues 260 to 285 form a basic motif region; sequence RLKQKRRTLKNRGYAQSCRFKRVQQR. One can recognise a bZIP domain in the interval 260–323; sequence RLKQKRRTLK…DLYKEKYEKL (64 aa). Positions 288–309 are leucine-zipper; sequence LESEKCQLQSQVEQLKLEVGRL. A disordered region spans residues 322–359; the sequence is KLAGRGGPGGAGGAGFPREPSPAQAGPGAAKGAPDFFL. Residues 325 to 336 are compositionally biased toward gly residues; that stretch reads GRGGPGGAGGAG. The span at 343–359 shows a compositional bias: low complexity; sequence PAQAGPGAAKGAPDFFL.

Belongs to the bZIP family. Maf subfamily. In terms of assembly, forms homodimers. Interacts with NEUROD1 and PDX1. May interact with MAFB, FOS, JUN and PCAF. In terms of processing, ubiquitinated, leading to its degradation by the proteasome. Phosphorylated at tyrosines. As to expression, expressed in brain, lung, spleen, pancreas and kidney. In the pancreas, expressed in the insulin-producing beta-cells of the islets of Langerhans (at protein level). Also expressed in the eye.

Its subcellular location is the nucleus. Functionally, transcriptional factor that activates insulin gene expression. Acts synergistically with NEUROD1/BETA2 and PDX1. Binds the insulin enhancer C1/RIPE3b element. Binds to consensus TRE-type MARE 5'-TGCTGACTCAGCA-3' DNA sequence. This Mus musculus (Mouse) protein is Transcription factor MafA (Mafa).